Consider the following 128-residue polypeptide: Ribonuclease P protein component (128 aa).

It belongs to the RnpA family. As to quaternary structure, consists of a catalytic RNA component (M1 or rnpB) and a protein subunit.

It catalyses the reaction Endonucleolytic cleavage of RNA, removing 5'-extranucleotides from tRNA precursor.. RNaseP catalyzes the removal of the 5'-leader sequence from pre-tRNA to produce the mature 5'-terminus. It can also cleave other RNA substrates such as 4.5S RNA. The protein component plays an auxiliary but essential role in vivo by binding to the 5'-leader sequence and broadening the substrate specificity of the ribozyme. The protein is Ribonuclease P protein component of Chromohalobacter salexigens (strain ATCC BAA-138 / DSM 3043 / CIP 106854 / NCIMB 13768 / 1H11).